We begin with the raw amino-acid sequence, 416 residues long: NADH-quinone oxidoreductase subunit H (416 aa).

The next 9 membrane-spanning stretches (helical) occupy residues 16-36, 84-104, 124-144, 165-185, 197-217, 260-280, 288-308, 320-340, and 353-373; these read LILA…LAAI, PVYL…FAVI, LAVA…GIVL, VVSY…YAGT, STWY…SMVG, VSAL…PISL, WWPL…YIWL, FMAI…MIVA, and WASG…VILW.

This sequence belongs to the complex I subunit 1 family. In terms of assembly, NDH-1 is composed of 14 different subunits. Subunits NuoA, H, J, K, L, M, N constitute the membrane sector of the complex.

The protein resides in the cell membrane. The enzyme catalyses a quinone + NADH + 5 H(+)(in) = a quinol + NAD(+) + 4 H(+)(out). Its function is as follows. NDH-1 shuttles electrons from NADH, via FMN and iron-sulfur (Fe-S) centers, to quinones in the respiratory chain. The immediate electron acceptor for the enzyme in this species is believed to be menaquinone. Couples the redox reaction to proton translocation (for every two electrons transferred, four hydrogen ions are translocated across the cytoplasmic membrane), and thus conserves the redox energy in a proton gradient. This subunit may bind ubiquinone. The polypeptide is NADH-quinone oxidoreductase subunit H (Mycobacterium sp. (strain KMS)).